The following is a 389-amino-acid chain: Teichoic acid glycerol-phosphate transferase (389 aa).

It belongs to the CDP-glycerol glycerophosphotransferase family.

The protein localises to the cell membrane. It carries out the reaction 4-O-[(2R)-glycerylphospho]-N-acetyl-beta-D-mannosaminyl-(1-&gt;4)-N-acetyl-alpha-D-glucosaminyl di-trans,octa-cis-undecaprenyl diphosphate + CDP-glycerol = 4-O-[di(2R)-glycerylphospho]-N-acetyl-beta-D-mannosaminyl-(1-&gt;4)-N-acetyl-alpha-D-glucosaminyl di-trans,octa-cis-undecaprenyl diphosphate + CMP + H(+). Its pathway is cell wall biogenesis; poly(ribitol phosphate) teichoic acid biosynthesis. In terms of biological role, catalyzes the addition of a second glycerol phosphate unit from CDP-glycerol to the prenolpyrophosphate-linked disaccharide, to complete the linkage unit. The polypeptide is Teichoic acid glycerol-phosphate transferase (tarF) (Staphylococcus aureus (strain NCTC 8325 / PS 47)).